The sequence spans 57 residues: Large ribosomal subunit protein bL32 (57 aa).

A compositionally biased stretch (basic residues) spans 1–20 (MAVPKRRMSRSNTRSRRAQW). The segment at 1 to 22 (MAVPKRRMSRSNTRSRRAQWKA) is disordered.

It belongs to the bacterial ribosomal protein bL32 family.

The protein is Large ribosomal subunit protein bL32 of Mycobacterium sp. (strain JLS).